The sequence spans 122 residues: Large ribosomal subunit protein uL14 (122 aa).

This sequence belongs to the universal ribosomal protein uL14 family. In terms of assembly, part of the 50S ribosomal subunit. Forms a cluster with proteins L3 and L19. In the 70S ribosome, L14 and L19 interact and together make contacts with the 16S rRNA in bridges B5 and B8.

Functionally, binds to 23S rRNA. Forms part of two intersubunit bridges in the 70S ribosome. The protein is Large ribosomal subunit protein uL14 of Streptococcus equi subsp. equi (strain 4047).